Here is a 161-residue protein sequence, read N- to C-terminus: Zinc finger A20 and AN1 domain-containing stress-associated protein 9 (161 aa).

The A20-type zinc-finger motif lies at 17 to 51 (PEAPILCVNNCGFFGSSMTNNMCSKCYRDFVKVTT). Positions 23, 27, 39, and 42 each coordinate Zn(2+). The interval 62–99 (FTPASSSKTPLEPAKPDEVPAAAVEDKQAAQEPPKPPS) is disordered. Positions 75-90 (AKPDEVPAAAVEDKQA) are enriched in basic and acidic residues. An AN1-type zinc finger spans residues 96 to 142 (KPPSNRCLSCRKKVGLTGFQCRCGGTFCSTHRYTEAHDCTFDYKKAG). 8 residues coordinate Zn(2+): Cys102, Cys105, Cys116, Cys118, Cys123, His126, His132, and Cys134.

Functionally, may be involved in environmental stress response. This Oryza sativa subsp. japonica (Rice) protein is Zinc finger A20 and AN1 domain-containing stress-associated protein 9 (SAP9).